Here is a 344-residue protein sequence, read N- to C-terminus: Lipase chaperone (344 aa).

A helical membrane pass occupies residues 14 to 34; it reads AVVYGVVGLAAIAGVAMWSGA.

The protein belongs to the lipase chaperone family.

The protein resides in the cell inner membrane. Its function is as follows. May be involved in the folding of the extracellular lipase during its passage through the periplasm. The protein is Lipase chaperone (lifO) of Burkholderia cepacia (Pseudomonas cepacia).